The primary structure comprises 162 residues: ATP synthase subunit b (162 aa).

A helical membrane pass occupies residues 4 to 24 (INWGSIIYQLIAFCVLLWLLS).

This sequence belongs to the ATPase B chain family. F-type ATPases have 2 components, F(1) - the catalytic core - and F(0) - the membrane proton channel. F(1) has five subunits: alpha(3), beta(3), gamma(1), delta(1), epsilon(1). F(0) has three main subunits: a(1), b(2) and c(10-14). The alpha and beta chains form an alternating ring which encloses part of the gamma chain. F(1) is attached to F(0) by a central stalk formed by the gamma and epsilon chains, while a peripheral stalk is formed by the delta and b chains.

It localises to the cell membrane. Functionally, f(1)F(0) ATP synthase produces ATP from ADP in the presence of a proton or sodium gradient. F-type ATPases consist of two structural domains, F(1) containing the extramembraneous catalytic core and F(0) containing the membrane proton channel, linked together by a central stalk and a peripheral stalk. During catalysis, ATP synthesis in the catalytic domain of F(1) is coupled via a rotary mechanism of the central stalk subunits to proton translocation. Component of the F(0) channel, it forms part of the peripheral stalk, linking F(1) to F(0). The sequence is that of ATP synthase subunit b from Halalkalibacterium halodurans (strain ATCC BAA-125 / DSM 18197 / FERM 7344 / JCM 9153 / C-125) (Bacillus halodurans).